We begin with the raw amino-acid sequence, 586 residues long: Phosphomethylpyrimidine synthase (586 aa).

Residues Met1 to Val33 are disordered. Residues Val22 to Val33 are compositionally biased toward basic and acidic residues. Substrate-binding positions include Asn193, Met222, Tyr251, His287, Ser307–Gly309, Asp348–Arg351, and Glu387. His391 serves as a coordination point for Zn(2+). Tyr414 contacts substrate. His455 contacts Zn(2+). [4Fe-4S] cluster is bound by residues Cys535, Cys538, and Cys543.

It belongs to the ThiC family. Requires [4Fe-4S] cluster as cofactor.

The enzyme catalyses 5-amino-1-(5-phospho-beta-D-ribosyl)imidazole + S-adenosyl-L-methionine = 4-amino-2-methyl-5-(phosphooxymethyl)pyrimidine + CO + 5'-deoxyadenosine + formate + L-methionine + 3 H(+). It functions in the pathway cofactor biosynthesis; thiamine diphosphate biosynthesis. Its function is as follows. Catalyzes the synthesis of the hydroxymethylpyrimidine phosphate (HMP-P) moiety of thiamine from aminoimidazole ribotide (AIR) in a radical S-adenosyl-L-methionine (SAM)-dependent reaction. This Bacillus cereus (strain G9842) protein is Phosphomethylpyrimidine synthase.